The following is a 551-amino-acid chain: MPQLNSGGGDELGANDELIRFKDEGEQEEKSPGEGSAEGDLADVKSSLVNESENHSSDSDSEVERRPPPRETFEKPRDYLSEAFRRQQDAAFFKGPPYAGYPFLMIPDLGGHYLPNGALSPSARAYLQMKWPLLDSPSTAGLKDARSPSPAHLSNKVPVVQHPHHMHPLTPLITYSNEHFSPGTPPGHLSPEIDPKTGIPRPPHPSELSPYYPLSPGAVGQIPHPLGWLVPQQGQPMYSIPPGGFRHPYPALAMNASMSSLVSSRFSPHMVPPPHHSLHTSGIPHPAIVSPIVKQEPSSGNISPNLSTKSNVVVKKEEEKKPHIKKPLNAFMLYMKEMRAKVVAECTLKESAAINQILGRRWHSLSREEQAKYYELARKERQLHSQLYPSWSARDNYGKKKKRKREKQSPEMENYTKTKKMCVQHFPSDKSCDSPASSHGSMLDSPATPSAALASPAAPAATHSEQAQPLSLTTKPEARALSHSAAFLASKSPSSSSLSGHLPSPVGSPLLSRPIPLTSSILSPPGVFPSALQALPLLQAQPLSLVTRSSD.

Over residues 1-11 (MPQLNSGGGDE) the composition is skewed to gly residues. The interaction with CTNNB1-A stretch occupies residues 1 to 61 (MPQLNSGGGD…SENHSSDSDS (61 aa)). Disordered stretches follow at residues 1–77 (MPQL…EKPR), 183–213 (GTPP…PYYP), 391–474 (WSAR…SLTT), and 492–515 (SPSS…SRPI). Composition is skewed to basic and acidic residues over residues 17–32 (ELIR…EKSP) and 52–77 (SENH…EKPR). The tract at residues 109–312 (LGGHYLPNGA…SPNLSTKSNV (204 aa)) is interaction with AES and TLE4-A. Residues 324 to 392 (IKKPLNAFML…LHSQLYPSWS (69 aa)) constitute a DNA-binding region (HMG box). Positions 407 to 416 (KQSPEMENYT) are enriched in basic and acidic residues. An interaction with CTBP-B region spans residues 408 to 551 (QSPEMENYTK…PLSLVTRSSD (144 aa)). The span at 445-464 (SPATPSAALASPAAPAATHS) shows a compositional bias: low complexity. Positions 465–474 (EQAQPLSLTT) are enriched in polar residues.

This sequence belongs to the TCF/LEF family. Interacts with csnk1e, ctnnb1-A, ctbp-B, dact1-A and gsk3b. May interact with ase and tle4-A. Interacts with tle1-B. In terms of processing, phosphorylated. Phosphorylation by csnk1e promotes binding to ctnnb1-A while phosphorylation by gsk3b may reverse this effect.

The protein localises to the nucleus. Its function is as follows. Participates in the Wnt signaling pathway. Binds to DNA and acts as a repressor in the absence of ctnnb1-A and possibly ctnnb1-B, and as an activator in the presence of these proteins. Required early in development for the establishment of the dorsal body axis in response to maternal Wnt signaling. In Xenopus laevis (African clawed frog), this protein is Transcription factor 7-like 1-B (tcf7l1-b).